The following is a 21-amino-acid chain: Fibrinogen beta chain (21 aa).

The span at 1–11 (EFPTDYDEGED) shows a compositional bias: acidic residues. Residues 1–21 (EFPTDYDEGEDDRPKVGLGAR) form a disordered region. The residue at position 6 (Y6) is a Sulfotyrosine.

As to quaternary structure, heterohexamer; disulfide linked. Contains 2 sets of 3 non-identical chains (alpha, beta and gamma). The 2 heterotrimers are in head to head conformation with the N-termini in a small central domain. In terms of processing, conversion of fibrinogen to fibrin is triggered by thrombin, which cleaves fibrinopeptides A and B from alpha and beta chains, and thus exposes the N-terminal polymerization sites responsible for the formation of the soft clot.

It is found in the secreted. Cleaved by the protease thrombin to yield monomers which, together with fibrinogen alpha (FGA) and fibrinogen gamma (FGG), polymerize to form an insoluble fibrin matrix. Fibrin has a major function in hemostasis as one of the primary components of blood clots. In addition, functions during the early stages of wound repair to stabilize the lesion and guide cell migration during re-epithelialization. Was originally thought to be essential for platelet aggregation, based on in vitro studies using anticoagulated blood. However subsequent studies have shown that it is not absolutely required for thrombus formation in vivo. Enhances expression of SELP in activated platelets. Maternal fibrinogen is essential for successful pregnancy. Fibrin deposition is also associated with infection, where it protects against IFNG-mediated hemorrhage. May also facilitate the antibacterial immune response via both innate and T-cell mediated pathways. This Bison bonasus (European bison) protein is Fibrinogen beta chain (FGB).